A 24-amino-acid polypeptide reads, in one-letter code: Neurotoxin 5 (24 aa).

In terms of domain architecture, LCN-type CS-alpha/beta spans 2–24 (RDAYIAQNYNCVYTCFKNDYCND).

It belongs to the long (4 C-C) scorpion toxin superfamily. Sodium channel inhibitor family. Alpha subfamily. Expressed by the venom gland.

It localises to the secreted. Functionally, binds to sodium channels (Nav) and inhibits the inactivation of the activated channels, thereby blocking neuronal transmission. The polypeptide is Neurotoxin 5 (Buthus occitanus tunetanus (Common European scorpion)).